An 835-amino-acid chain; its full sequence is Cell division control protein 48 (835 aa).

Residues M1–K21 form a disordered region. P257–L263 contacts ATP. Glycyl lysine isopeptide (Lys-Gly) (interchain with G-Cter in ubiquitin) cross-links involve residues K305, K322, and K346. Positions 358 and 394 each coordinate ATP. S472 and S519 each carry phosphoserine. A Glycyl lysine isopeptide (Lys-Gly) (interchain with G-Cter in ubiquitin) cross-link involves residue K522. Residue G531–L536 coordinates ATP. Glycyl lysine isopeptide (Lys-Gly) (interchain with G-Cter in ubiquitin) cross-links involve residues K539, K594, and K673. A compositionally biased stretch (basic and acidic residues) spans E720 to G729. Residues E720–E746 form a disordered region. T735 carries the phosphothreonine modification. Residue S770 is modified to Phosphoserine. The disordered stretch occupies residues S792–S835. Low complexity predominate over residues G802 to N826.

The protein belongs to the AAA ATPase family. In terms of assembly, component of the heterotrimeric CDC48-NPL4-UFD1 ATPase complex. The CDC48-NPL4-UFD1 ATPase complex interacts with the HRD1 ubiquitin ligase complex composed of the E3 ligase HRD1, its cofactors HRD3, USA1 and DER1, substrate recruiting factor YOS9 and CDC48-binding protein UBX2. Interaction between the complexes is mediated by interaction between CDC48-NPL4-UFD1 complex member CDC48 and HRD1 complex member UBX2. Forms a complex composed of CDC48, NPL4, UFD1, UFD2 and SHP1. Forms a complex composed of CDC48, NPL4, UFD1, DOA1, SHP1 and deubiquitinase OTU1; within the complex interacts with DOA1/UFD3 and OTU1 to prevent multiubiquitination of substrates. Interacts with UFD2, to add further ubiquitin moieties; the interaction with UFD2 is prevented by DOA1/UFD3. Forms a complex composed of CDC48, DOA1, deubiquitinase UBP3 and probably BRE5; within the complex interacts with DOA1 and UBP3. Interacts (via C-terminus) with DOA1 (via PUL domain); the interaction is direct. Interacts with NPL4. Interacts with SHP1/UBX1, UBX2, UBX3, UBX4, UBX5, UBX6 and UBX7. Interacts with VMS1; the interaction recruits CDC48 to the mitochondria in response to mitochondrial stress. Component of the ribosome quality control complex (RQC), composed of the E3 ubiquitin ligase RKR1/LTN1, RQC1 and RQC2, as well as CDC48 and its ubiquitin-binding cofactors. RQC forms a stable complex with 60S ribosomal subunits. Interacts with ASE1 and CDC5; the interaction is likely to result in their degradation. Component of the DSCc E3 ligase complexes composed of at least TUL1, DSC2, DSC3, UBX3, CDC48 as well as VLD1 for the vacuole-localized complex or GLD1 for the Golgi/endosome-localized complex.

The protein resides in the microsome. The protein localises to the endoplasmic reticulum. Its subcellular location is the cytoplasm. The catalysed reaction is ATP + H2O = ADP + phosphate + H(+). With respect to regulation, the first ATP-binding region has low ATPase activity. The second ATP-binding region is responsible for ATPase activity. ATP binding to the first ATP-binding region induces intrinsic activity of the second ATP-binding region. While ATP binding to the first ATP-binding region appears to prevent ATP hydrolysis by the second ATP-binding region, ADP-binding to first region promotes the coordinate and cooperative ATPase cycle of the second ATP-binding region. ATP binding to the first ATP-binding region induces a conformational change, promoting the rotation of the first ATP-binding region relative to the second ATP-binding region in the hexamer. In terms of biological role, ATP-dependent chaperone which probably uses the energy provided by ATP hydrolysis to generate mechanical force to unfold substrate proteins, disassemble protein complexes, and disaggregate protein aggregates. By recruiting and promoting the degradation of ubiquitinated proteins, plays a role in the ubiquitin fusion degradation (UFD) pathway. Has a role in the endoplasmic reticulum-associated degradation (ERAD) pathway which mediates the cytoplasmic elimination of misfolded proteins exported from the ER. Required for the proteasome-dependent processing/activation of MGA2 and SPT23 transcription factors leading to the subsequent expression of OLE1. Has an additional role in the turnover of OLE1 where it targets ubiquitinated OLE1 and other proteins to the ERAD. Regulates ubiquitin-mediated mitochondria protein degradation. Involved in spindle disassembly probably by promoting the degradation of spindle assembly factors ASE1 and CDC5 at the end of mitosis. Component of the ribosome quality control complex (RQC), a ribosome-associated complex that mediates ubiquitination and extraction of incompletely synthesized nascent chains for proteasomal degradation. CDC48 may provide the mechanical force that dislodges the polyubiquitinated nascent peptides from the exit channel. Required for ribophagy, a process which relocalizes ribosomal particles into the vacuole for degradation in response to starvation. Component of the DSC E3 ubiquitin ligase complexes that tag proteins present in Golgi, endosome and vacuole membranes and function in protein homeostasis under non-stress conditions and support a role in protein quality control. Substrate initially binds through the attached polyubiquitin chain to UDF1/NPL4 and then moves through the pore of the ATPase rings and is thereby unfolded. Acts on a broad range of even well-folded proteins via ubiquitin-binding and unfolding to initiate substrate processing. Involved in degradation of mislocalized tail-anchored transmembrane proteins extracted from the mitochondrion outer membrane by MSP1 and ubiquitinated by DOA10. This Saccharomyces cerevisiae (strain ATCC 204508 / S288c) (Baker's yeast) protein is Cell division control protein 48.